Consider the following 84-residue polypeptide: Toxin Acra3 (84 aa).

The first 17 residues, 1–17, serve as a signal peptide directing secretion; it reads MKIIFLVLMMILSEVYS. Positions 19-82 constitute an LCN-type CS-alpha/beta domain; the sequence is RDGYPVHDGT…VYGDDGIFCK (64 aa). Cystine bridges form between cysteine 30-cysteine 81, cysteine 34-cysteine 57, cysteine 43-cysteine 62, and cysteine 47-cysteine 64. At serine 83 the chain carries Serine amide.

This sequence belongs to the long (4 C-C) scorpion toxin superfamily. Sodium channel inhibitor family. Beta subfamily. In terms of tissue distribution, expressed by the venom gland.

The protein localises to the secreted. Toxin with unknown target. In vivo, induces severe neurotoxic events in mice such as excitability and convulsions, leading to the death of the animals within a few minutes after injection. Exerts very strong cytotoxic effect on a mouse brain tumor cell line (BC3H1) (IC(50)=5 mg/ml). It exerts its effects by inducing a stronger necrosis than apoptosis in BC3H1 cells. The chain is Toxin Acra3 from Androctonus crassicauda (Arabian fat-tailed scorpion).